The sequence spans 492 residues: Coagulation factor X (492 aa).

Residues 1–23 form the signal peptide; sequence MAGLLHLVLLSTALGGLLRPAGS. Residues 24-40 constitute a propeptide that is removed on maturation; sequence VFLPRDQAHRVLQRARR. One can recognise a Gla domain in the interval 41–85; sequence ANSFLEEVKQGNLERECLEEACSLEEAREVFEDAEQTDEFWSKYK. A 4-carboxyglutamate mark is found at glutamate 46, glutamate 47, glutamate 54, glutamate 56, glutamate 59, glutamate 60, glutamate 65, glutamate 66, glutamate 69, glutamate 72, glutamate 75, and glutamate 79. A disulfide bridge links cysteine 57 with cysteine 62. In terms of domain architecture, EGF-like 1; calcium-binding spans 86 to 122; sequence DGDQCEGHPCLNQGHCKDGIGDYTCTCAEGFEGKNCE. 11 disulfide bridges follow: cysteine 90–cysteine 101, cysteine 95–cysteine 110, cysteine 112–cysteine 121, cysteine 129–cysteine 140, cysteine 136–cysteine 149, cysteine 151–cysteine 164, cysteine 172–cysteine 341, cysteine 240–cysteine 245, cysteine 260–cysteine 276, cysteine 389–cysteine 403, and cysteine 414–cysteine 442. Aspartate 103 is subject to (3R)-3-hydroxyaspartate. Residues 125–165 enclose the EGF-like 2 domain; that stretch reads TREICSLDNGGCDQFCREERSEVRCSCAHGYVLGDDSKSCV. Residues 183–233 constitute a propeptide, activation peptide; it reads WAIHTSEDALDASELEHYDPADLSPTESSLDLLGLNRTEPSAGEDGSQVVR. Position 200 is a sulfotyrosine (tyrosine 200). O-linked (GalNAc...) threonine glycosylation is present at threonine 208. An N-linked (GlcNAc...) asparagine glycan is attached at asparagine 218. The Peptidase S1 domain occupies 234-466; it reads IVGGRDCAEG…FLKWIDKIMK (233 aa). Catalysis depends on charge relay system residues histidine 275 and aspartate 321. The active-site Charge relay system is the serine 418. The segment at 472 to 492 is disordered; the sequence is AGSRGHSEAPATWTVPPPLPL. The propeptide at 476–492 is may be removed but is not necessary for activation; it reads GHSEAPATWTVPPPLPL. Threonine 485 carries O-linked (GalNAc...) threonine glycosylation.

The protein belongs to the peptidase S1 family. In terms of assembly, the two chains are formed from a single-chain precursor by the excision of two Arg residues and are held together by 1 or more disulfide bonds. Forms a heterodimer with SERPINA5. Interacts (activated) with guianensin, an anticoagulant protein from Simulium guianense saliva. Interacts (activated) with simukunin, an anticoagulant protein from Simulium vittatum saliva. Post-translationally, the vitamin K-dependent, enzymatic carboxylation of some glutamate residues allows the modified protein to bind calcium. In terms of processing, N- and O-glycosylated. Proteolytically cleaved and activated by cathepsin CTSG. The activation peptide is cleaved by factor IXa (in the intrinsic pathway), or by factor VIIa (in the extrinsic pathway). Post-translationally, the iron and 2-oxoglutarate dependent 3-hydroxylation of aspartate and asparagine is (R) stereospecific within EGF domains.

The protein resides in the secreted. The enzyme catalyses Selective cleavage of Arg-|-Thr and then Arg-|-Ile bonds in prothrombin to form thrombin.. Its activity is regulated as follows. Inhibited by SERPINA5. Factor Xa is a vitamin K-dependent glycoprotein that converts prothrombin to thrombin in the presence of factor Va, calcium and phospholipid during blood clotting. Factor Xa activates pro-inflammatory and pro-fibrotic signaling pathways in a protease-activated receptor (PAR)-dependent manner. This is Coagulation factor X (F10) from Bos taurus (Bovine).